Consider the following 219-residue polypeptide: MQEILKAGDIFKTYGTVDVLKGIDFSVQQGEVVSIVGASGAGKSTLLHILGSLDRPDTGWVKIKDEEISAMNDKTLSAFRNQHIGFIFQFHNLLPEFTAVENVLLPAMIGKRNLKEAENRAKDLLRFLGLDHRFTHYPNQLSGGEQQRVAVARSLINDPLIVFADEPSGNLDTHNAEELHQLFFDLRKTYNQTFVIVTHNEKLADLSDRKVVMQDGVII.

The ABC transporter domain maps to 5–219; that stretch reads LKAGDIFKTY…KVVMQDGVII (215 aa). An ATP-binding site is contributed by 37–44; it reads GASGAGKS.

This sequence belongs to the ABC transporter superfamily. Lipoprotein translocase (TC 3.A.1.125) family. In terms of assembly, the complex is composed of two ATP-binding proteins (LolD) and two transmembrane proteins (LolC and LolE).

It is found in the cell inner membrane. Functionally, part of the ABC transporter complex LolCDE involved in the translocation of mature outer membrane-directed lipoproteins, from the inner membrane to the periplasmic chaperone, LolA. Responsible for the formation of the LolA-lipoprotein complex in an ATP-dependent manner. This is Lipoprotein-releasing system ATP-binding protein LolD from Cytophaga hutchinsonii (strain ATCC 33406 / DSM 1761 / CIP 103989 / NBRC 15051 / NCIMB 9469 / D465).